The sequence spans 481 residues: Polygalacturonase QRT3 (481 aa).

Residues 1–27 (MELRKSQVAMPVFLAIMSLMVSQVVFA) form the signal peptide. 3 PbH1 repeats span residues 203–226 (SLRT…LVKS), 261–282 (GNDN…MVSG), and 356–377 (IRGV…QIVQ). Asn-415 and Asn-455 each carry an N-linked (GlcNAc...) asparagine glycan.

This sequence belongs to the glycosyl hydrolase 28 family. Expressed in the tapetum cells in the anthers and in the ovules of open flowers.

Its subcellular location is the secreted. It localises to the cell wall. The enzyme catalyses (1,4-alpha-D-galacturonosyl)n+m + H2O = (1,4-alpha-D-galacturonosyl)n + (1,4-alpha-D-galacturonosyl)m.. Its function is as follows. Polygalacturonase required for degrading the pollen mother cell wall during microspore development. The protein is Polygalacturonase QRT3 (QRT3) of Arabidopsis thaliana (Mouse-ear cress).